Here is a 56-residue protein sequence, read N- to C-terminus: Putative 2-Cys peroxiredoxin BAS1 (56 aa).

It belongs to the peroxiredoxin family. AhpC/Prx1 subfamily. In terms of assembly, homodimer; disulfide-linked, upon oxidation.

Its subcellular location is the plastid. It localises to the chloroplast. The catalysed reaction is a hydroperoxide + [thioredoxin]-dithiol = an alcohol + [thioredoxin]-disulfide + H2O. Its function is as follows. Thiol-specific peroxidase that catalyzes the reduction of hydrogen peroxide and organic hydroperoxides to water and alcohols, respectively. Plays a role in cell protection against oxidative stress by detoxifying peroxides. May be an antioxidant enzyme particularly in the developing shoot and photosynthesizing leaf. This Pinus strobus (Eastern white pine) protein is Putative 2-Cys peroxiredoxin BAS1.